We begin with the raw amino-acid sequence, 421 residues long: MTESVLDYMSRLGRDARAASRLLARAATAQKNRALLAAADALDAARAELSHANEQDLAAGRANGLEPAMLDRLALTPARIDDMIEGLRQVATLPDPIGEIRDMRYVPSGIQIGKMRVPLGVVGIIYESRPNVTIDAASLCLKSGNATILRGGSEAIHSNQAIARCIQQGLAEAGLPAAAVQVVETTDRAAVGALISMPEYVDVIVPRGGKGLIERISREAKVPVIKHLDGICHVYIDVAADLDKAIRVADNAKTQRYAPCNTMETLLVHAGIAERVLPPLATIYREKGVELRGDAATRALLGADVLEATEEDWRTEYNAPILSIRIVDGLDAAIEHINTYGSQHTDAIITENFSDARRFLAEVDSASVMVNASTRFADGFEYGLGAEIGISTDKLHARGPVGLEGLTSEKYVVFGDGHVRT.

It belongs to the gamma-glutamyl phosphate reductase family.

Its subcellular location is the cytoplasm. It catalyses the reaction L-glutamate 5-semialdehyde + phosphate + NADP(+) = L-glutamyl 5-phosphate + NADPH + H(+). Its pathway is amino-acid biosynthesis; L-proline biosynthesis; L-glutamate 5-semialdehyde from L-glutamate: step 2/2. Functionally, catalyzes the NADPH-dependent reduction of L-glutamate 5-phosphate into L-glutamate 5-semialdehyde and phosphate. The product spontaneously undergoes cyclization to form 1-pyrroline-5-carboxylate. The protein is Gamma-glutamyl phosphate reductase of Pseudomonas aeruginosa (strain ATCC 15692 / DSM 22644 / CIP 104116 / JCM 14847 / LMG 12228 / 1C / PRS 101 / PAO1).